The sequence spans 405 residues: Tryptophan synthase beta chain (405 aa).

The residue at position 98 (lysine 98) is an N6-(pyridoxal phosphate)lysine.

It belongs to the TrpB family. Tetramer of two alpha and two beta chains. Pyridoxal 5'-phosphate serves as cofactor.

It catalyses the reaction (1S,2R)-1-C-(indol-3-yl)glycerol 3-phosphate + L-serine = D-glyceraldehyde 3-phosphate + L-tryptophan + H2O. It participates in amino-acid biosynthesis; L-tryptophan biosynthesis; L-tryptophan from chorismate: step 5/5. Functionally, the beta subunit is responsible for the synthesis of L-tryptophan from indole and L-serine. This is Tryptophan synthase beta chain from Xanthomonas axonopodis pv. citri (strain 306).